Reading from the N-terminus, the 396-residue chain is MASVTFSVPKGFTEFSGLRSSSASLPFGKKLSSDEFVSIVSFQTSAMGSSGGYRKGVTEAKLKVAINGFGRIGRNFLRCWHGRKDSPLDIIAINDTGGVKQASHLLKYDSTLGIFDADVKPSGETAISVDGKIIQVVSNRNPSLLPWKELGIDIVIEGTGVFVDREGAGKHIEAGAKKVIITAPGKGDIPTYVVGVNADAYSHDEPIISNASCTTNCLAPFVKVLDQKFGIIKGTMTTTHSYTGDQRLLDASHRDLRRARAAALNIVPTSTGAAKAVALVLPNLKGKLNGIALRVPTPNVSVVDLVVQVSKKTFAEEVNAAFRDSAEKELKGILDVCDEPLVSVDFRCSDFSTTIDSSLTMVMGDDMVKVIAWYDNEWGYSQRVVDLADIVANNWK.

The transit peptide at 1–60 (MASVTFSVPKGFTEFSGLRSSSASLPFGKKLSSDEFVSIVSFQTSAMGSSGGYRKGVTEA) directs the protein to the chloroplast. NADP(+)-binding positions include 71–72 (RI), aspartate 95, and arginine 140. Residues 212–214 (SCT), threonine 243, arginine 258, 271–272 (TG), and arginine 294 each bind D-glyceraldehyde 3-phosphate. Cysteine 213 acts as the Nucleophile in catalysis. Asparagine 376 is a binding site for NADP(+).

This sequence belongs to the glyceraldehyde-3-phosphate dehydrogenase family. In terms of assembly, tetramer of either four A chains (GAPDH 2) or two A and two B chains (GAPDH 1). In terms of tissue distribution, expressed in leaves and stems.

It is found in the plastid. The protein localises to the chloroplast membrane. The protein resides in the chloroplast stroma. The catalysed reaction is D-glyceraldehyde 3-phosphate + phosphate + NADP(+) = (2R)-3-phospho-glyceroyl phosphate + NADPH + H(+). It participates in carbohydrate biosynthesis; Calvin cycle. Functionally, involved in the photosynthetic reductive pentose phosphate pathway (Calvin-Benson cycle). Catalyzes the reduction of 1,3-diphosphoglycerate by NADPH. In Arabidopsis thaliana (Mouse-ear cress), this protein is Glyceraldehyde-3-phosphate dehydrogenase GAPA1, chloroplastic (GAPA1).